The sequence spans 191 residues: Sporulation-specific protein (191 aa).

Its function is as follows. Not essential for sporulation. This is Sporulation-specific protein (SPR6) from Saccharomyces cerevisiae (strain ATCC 204508 / S288c) (Baker's yeast).